The chain runs to 85 residues: Small ribosomal subunit protein uS17 (85 aa).

Belongs to the universal ribosomal protein uS17 family. Part of the 30S ribosomal subunit.

Its function is as follows. One of the primary rRNA binding proteins, it binds specifically to the 5'-end of 16S ribosomal RNA. This Geobacter sp. (strain M21) protein is Small ribosomal subunit protein uS17.